The primary structure comprises 133 residues: Profilin Sal k 4.0201 (133 aa).

An intrachain disulfide couples cysteine 95 to cysteine 117.

This sequence belongs to the profilin family. Occurs in many kinds of cells as a complex with monomeric actin in a 1:1 ratio. As to expression, expressed in pollen (at protein and mRNA level).

It localises to the cytoplasm. The protein localises to the cytoskeleton. In terms of biological role, binds to actin and affects the structure of the cytoskeleton. At high concentrations, profilin prevents the polymerization of actin, whereas it enhances it at low concentrations. This Kali turgidum (Prickly saltwort) protein is Profilin Sal k 4.0201.